The sequence spans 329 residues: Beta-1,3-galactosyltransferase 6 (329 aa).

Over 1–11 (MKLLRRAWRRR) the chain is Cytoplasmic. The chain crosses the membrane as a helical; Signal-anchor for type II membrane protein span at residues 12-34 (AALGLGTLALCGAALLYLARCAA). The Lumenal segment spans residues 35–329 (EPGDPRAMSG…QCCQRREGIP (295 aa)). Asparagine 131 carries an N-linked (GlcNAc...) asparagine glycan.

This sequence belongs to the glycosyltransferase 31 family. Mn(2+) is required as a cofactor. As to expression, ubiquitous.

Its subcellular location is the golgi apparatus. The protein resides in the golgi stack membrane. The enzyme catalyses 3-O-(beta-D-galactosyl-(1-&gt;4)-beta-D-xylosyl)-L-seryl-[protein] + UDP-alpha-D-galactose = 3-O-(beta-D-galactosyl-(1-&gt;3)-beta-D-galactosyl-(1-&gt;4)-beta-D-xylosyl)-L-seryl-[protein] + UDP + H(+). The protein operates within glycan metabolism; chondroitin sulfate biosynthesis. Its pathway is glycan metabolism; heparan sulfate biosynthesis. Its function is as follows. Beta-1,3-galactosyltransferase that transfers galactose from UDP-galactose to substrates with a terminal beta-linked galactose residue. Has a preference for galactose-beta-1,4-xylose that is found in the linker region of glycosaminoglycans, such as heparan sulfate and chondroitin sulfate. Has no activity towards substrates with terminal glucosamine or galactosamine residues. This Homo sapiens (Human) protein is Beta-1,3-galactosyltransferase 6 (B3GALT6).